Consider the following 2410-residue polypeptide: Genome polyprotein 1 (2410 aa).

The disordered stretch occupies residues 1–22; that stretch reads MEQTLAQAVSRKSKTDTPMAEE. The Helicase ATP-binding domain occupies 474-632; the sequence is KMADANNCWS…AARKYPLHVE (159 aa). 487-494 contacts ATP; the sequence is GHTGSGKS. Residues 647 to 813 form the Helicase C-terminal domain; that stretch reads GGGDLLDISK…NVPFYMNETF (167 aa). An O-(5'-phospho-RNA)-tyrosine modification is found at tyrosine 1234. The Peptidase C4 domain occupies 1359–1573; the sequence is ITLEASTGIL…CGYASHTALF (215 aa). Catalysis depends on for nuclear inclusion protein A activity residues histidine 1404, aspartate 1440, and cysteine 1507. The RdRp catalytic domain occupies 1857–1980; sequence WLHGSGDGSR…AISPQFDEEF (124 aa). The tract at residues 2173–2200 is disordered; it reads TRTPTEDDGKLKTPSGARIPSSAADGNW.

It belongs to the bymoviruses polyprotein 1 family. In terms of processing, VPg is uridylylated by the polymerase and is covalently attached to the 5'-end of the genomic RNA. This uridylylated form acts as a nucleotide-peptide primer for the polymerase. Post-translationally, the viral RNA1 of bymoviruses is expressed as a single polyprotein which undergoes post-translational proteolytic processing by the main proteinase NIa-pro resulting in the production of at least eight individual proteins.

It localises to the host cytoplasmic vesicle. Its subcellular location is the virion. It carries out the reaction RNA(n) + a ribonucleoside 5'-triphosphate = RNA(n+1) + diphosphate. The enzyme catalyses Hydrolyzes glutaminyl bonds, and activity is further restricted by preferences for the amino acids in P6 - P1' that vary with the species of potyvirus, e.g. Glu-Xaa-Xaa-Tyr-Xaa-Gln-|-(Ser or Gly) for the enzyme from tobacco etch virus. The natural substrate is the viral polyprotein, but other proteins and oligopeptides containing the appropriate consensus sequence are also cleaved.. Functionally, indispensable for virus replication. Mediates the cap-independent, EIF4E-dependent translation of viral genomic RNAs. Binds to the cap-binding site of host EIF4E and thus interferes with the host EIF4E-dependent mRNA export and translation. VPg-RNA directly binds EIF4E and is a template for transcription. Also forms trimeric complexes with EIF4E-EIF4G, which are templates for translation. Its function is as follows. Has RNA-binding and proteolytic activities. In terms of biological role, an RNA-dependent RNA polymerase that plays an essential role in the virus replication. The chain is Genome polyprotein 1 from Hordeum vulgare (Barley).